Here is a 349-residue protein sequence, read N- to C-terminus: MKISLTSARQLARDILAAQQVPADIADDVAEHLVESDRCGYISHGLSILPNYRTALDGHSVNPQGRAKCVLDQGTLMVFDGDGGFGQHVGKSVMQAAIERVRQHGHCIVTLRRSHHLGRMGHYGEMAAAAGFVLLSFTNVINRAPVVAPFGGRVARLTTNPLCFAGPMPNGRPPLVVDIATSAIAINKARVLAEKGEPAPEGSIIGADGNPTTDASTMFGEHPGALLPFGGHKGYALGVVAELLAGVLSGGGTIQPDNPRGGVATNNLFAVLLNPALDLGLDWQSAEVEAFVRYLHDTPPAPGVDRVQYPGEYEAANRAQASDTLNINPAIWRNLERLAQSLNVAVPTA.

The interval 199–219 is disordered; the sequence is APEGSIIGADGNPTTDASTMF.

This sequence belongs to the LDH2/MDH2 oxidoreductase family.

The protein localises to the cytoplasm. The catalysed reaction is (S)-lactate + NAD(+) = pyruvate + NADH + H(+). Its pathway is fermentation; pyruvate fermentation to lactate; (S)-lactate from pyruvate: step 1/1. This chain is L-lactate dehydrogenase (ldh), found in Cupriavidus necator (strain ATCC 17699 / DSM 428 / KCTC 22496 / NCIMB 10442 / H16 / Stanier 337) (Ralstonia eutropha).